The primary structure comprises 404 residues: Cysteine desulfurase IscS (404 aa).

Pyridoxal 5'-phosphate is bound by residues Ala-75–Thr-76, Asn-155, Gln-183, and Ser-203–His-205. Lys-206 is subject to N6-(pyridoxal phosphate)lysine. Thr-243 contributes to the pyridoxal 5'-phosphate binding site. Cys-328 (cysteine persulfide intermediate) is an active-site residue. Position 328 (Cys-328) interacts with [2Fe-2S] cluster.

Belongs to the class-V pyridoxal-phosphate-dependent aminotransferase family. NifS/IscS subfamily. Homodimer. Forms a heterotetramer with IscU, interacts with other sulfur acceptors. Pyridoxal 5'-phosphate is required as a cofactor.

The protein localises to the cytoplasm. The enzyme catalyses (sulfur carrier)-H + L-cysteine = (sulfur carrier)-SH + L-alanine. It participates in cofactor biosynthesis; iron-sulfur cluster biosynthesis. Functionally, master enzyme that delivers sulfur to a number of partners involved in Fe-S cluster assembly, tRNA modification or cofactor biosynthesis. Catalyzes the removal of elemental sulfur atoms from cysteine to produce alanine. Functions as a sulfur delivery protein for Fe-S cluster synthesis onto IscU, an Fe-S scaffold assembly protein, as well as other S acceptor proteins. This Pseudomonas entomophila (strain L48) protein is Cysteine desulfurase IscS.